A 156-amino-acid polypeptide reads, in one-letter code: Small ribosomal subunit protein uS7 (156 aa).

It belongs to the universal ribosomal protein uS7 family. Part of the 30S ribosomal subunit. Contacts proteins S9 and S11.

Functionally, one of the primary rRNA binding proteins, it binds directly to 16S rRNA where it nucleates assembly of the head domain of the 30S subunit. Is located at the subunit interface close to the decoding center, probably blocks exit of the E-site tRNA. This Streptococcus pyogenes serotype M3 (strain ATCC BAA-595 / MGAS315) protein is Small ribosomal subunit protein uS7.